Here is a 238-residue protein sequence, read N- to C-terminus: Valine-rich protein (238 aa).

The N-terminal stretch at 1 to 16 (MQAVLLVVALFGAALA) is a signal peptide.

As to expression, prismatic layer of shell (at protein level). Expressed primarily in the mantle with highest level in the mantle edge and lower level in the mantle pallium.

Its subcellular location is the secreted. This chain is Valine-rich protein, found in Pinctada maxima (Silver-lipped pearl oyster).